A 289-amino-acid chain; its full sequence is Rhodopsin (289 aa).

Residues 1–7 (YLVNPAG) lie on the Extracellular side of the membrane. Residues 8-32 (YAALGAYMFLLILIGFPVNFLTLYV) traverse the membrane as a helical segment. Residues 33–44 (TLEHKKLRTPLN) lie on the Cytoplasmic side of the membrane. A helical membrane pass occupies residues 45-67 (YILLNLAVADLFMVLGGFTTTMY). Topologically, residues 68 to 81 (TSMHGYFVLGRLGC) are extracellular. The cysteines at positions 81 and 158 are disulfide-linked. Residues 82-104 (NLEGFFATLGGEIALWSLVVLAI) form a helical membrane-spanning segment. A 'Ionic lock' involved in activated form stabilization motif is present at residues 105–107 (ERW). Topologically, residues 105–123 (ERWIVGLKPIRNFRFTEDH) are cytoplasmic. Residues 124–144 (AIMGLAFSWVMALSCAVPPLA) traverse the membrane as a helical segment. Residues 145 to 173 (GWLRYIPEGIQGSCGVDYYTRAEGFNNES) lie on the Extracellular side of the membrane. The N-linked (GlcNAc...) asparagine glycan is linked to Asn171. The chain crosses the membrane as a helical span at residues 174–195 (FVIYMFTVHFLIPLSVIFFCYG). The Cytoplasmic segment spans residues 196-223 (RLLCAVKEAAAAQQESETTQRAEKEVSR). The chain crosses the membrane as a helical span at residues 224–245 (MVVIMVIGFLVCWLPYASVAWW). Residues 246 to 257 (IFCNQGSDFGPI) are Extracellular-facing. The chain crosses the membrane as a helical span at residues 258–279 (FMTLPSFFAKRPAIYNPMIYIC). Lys267 is subject to N6-(retinylidene)lysine. Residues 280 to 289 (MNKQFRHCMI) are Cytoplasmic-facing.

This sequence belongs to the G-protein coupled receptor 1 family. Opsin subfamily. In terms of processing, phosphorylated on some or all of the serine and threonine residues present in the C-terminal region. Post-translationally, contains one covalently linked retinal chromophore.

It is found in the membrane. The protein resides in the cell projection. It localises to the cilium. The protein localises to the photoreceptor outer segment. Functionally, photoreceptor required for image-forming vision at low light intensity. While most salt water fish species use retinal as chromophore, most freshwater fish use 3-dehydroretinal, or a mixture of retinal and 3-dehydroretinal. Light-induced isomerization of 11-cis to all-trans retinal triggers a conformational change that activates signaling via G-proteins. Subsequent receptor phosphorylation mediates displacement of the bound G-protein alpha subunit by arrestin and terminates signaling. The polypeptide is Rhodopsin (rho) (Limnocottus pallidus (Ray-finned fish)).